Here is a 309-residue protein sequence, read N- to C-terminus: Caspase-7 (309 aa).

The propeptide at 1-24 (MSGDQHADRSSGEKSNGDQDDTVD) is N-terminally processed. Positions 1–31 (MSGDQHADRSSGEKSNGDQDDTVDAKPDRSS) are enriched in basic and acidic residues. The disordered stretch occupies residues 1–53 (MSGDQHADRSSGEKSNGDQDDTVDAKPDRSSRLSLFAKKKKNGEEEQPKSSLS). The interval 39–42 (KKKN) is exosite. Residues 81 to 92 (KNFEDKTGMGTR) are loop L1. Active-site residues include His149 and Cys191. The tract at residues 192 to 201 (RGSEFDEGIQ) is loop L2. A propeptide spanning residues 204–214 (SGPANDTLETD) is cleaved from the precursor. Residues 234–246 (VPGYYSWRNPGRG) form a loop L3 region. A loop L4 region spans residues 282 to 296 (ESQSDDPRFSEKKQI).

It belongs to the peptidase C14A family. In terms of assembly, heterotetramer that consists of two anti-parallel arranged heterodimers, each one formed by a 20 kDa (p20) and a 11 kDa (p11) subunit. Post-translationally, cleavage by different proteases, such as granzyme B (GZMB), caspase-1 (CASP1), caspase-8 (CASP8) or caspase-9 (CASP9) generate the two active subunits. Its involvement in different programmed cell death processes is probably specified by the protease that activates CASP7. Cleaved and activated by initiator caspases (CASP8 and/or CASP9), leading to execution phase of apoptosis. Cleavage and maturation by GZMB regulates granzyme-mediated programmed cell death. Cleaved and activated by CASP1 in response to bacterial infection.

The protein resides in the cytoplasm. It localises to the cytosol. Its subcellular location is the nucleus. The protein localises to the secreted. It is found in the extracellular space. It carries out the reaction Strict requirement for an Asp residue at position P1 and has a preferred cleavage sequence of Asp-Glu-Val-Asp-|-.. During activation, the N-terminal disordered prodomain is removed by cleavage. Concomitantly, double cleavage gives rise to a large Caspase-7 subunit p20 and a small Caspase-7 subunit p11. The two large and two small subunits then assemble to form the active CASP7 complex. Can be cleaved and activated by different caspases, depending on the context. Cleaved and activated by initiator caspases (CASP8 and/or CASP9), leading to execution phase of apoptosis. Cleavage and maturation by GZMB regulates granzyme-mediated programmed cell death. Cleavage and maturation by CASP1 regulates pyroptosis. Inhibited by BIRC6; following inhibition of BIRC6-caspase binding by DIABLO/SMAC, BIRC6 is subjected to caspase cleavage, leading to an increase in active caspases. Functionally, thiol protease involved in different programmed cell death processes, such as apoptosis, pyroptosis or granzyme-mediated programmed cell death, by proteolytically cleaving target proteins. Has a marked preference for Asp-Glu-Val-Asp (DEVD) consensus sequences, with some plasticity for alternate non-canonical sequences. Its involvement in the different programmed cell death processes is probably determined by upstream proteases that activate CASP7. Acts as an effector caspase involved in the execution phase of apoptosis: following cleavage and activation by initiator caspases (CASP8 and/or CASP9), mediates execution of apoptosis by catalyzing cleavage of proteins. Compared to CASP3, acts as a minor executioner caspase and cleaves a limited set of target proteins. Acts as a key regulator of the inflammatory response in response to bacterial infection by catalyzing cleavage and activation of the sphingomyelin phosphodiesterase SMPD1 in the extracellular milieu, thereby promoting membrane repair. Cleaves BIRC6 following inhibition of BIRC6-caspase binding by DIABLO/SMAC. This chain is Caspase-7, found in Gallus gallus (Chicken).